The chain runs to 291 residues: 6-deoxy-6-sulfogluconolactonase (291 aa).

A divalent metal cation is bound by residues E17, N148, and D198. Residue D198 is the Proton donor/acceptor of the active site.

The protein belongs to the SMP-30/CGR1 family. It depends on a divalent metal cation as a cofactor.

It carries out the reaction 6-deoxy-6-sulfo-D-glucono-1,5-lactone + H2O = 6-deoxy-6-sulfo-D-gluconate + H(+). In terms of biological role, catalyzes the hydrolysis of 6-deoxy-6-sulfo-D-glucono-1,5-lactone to form 6-deoxy-6-sulfo-D-gluconate. Is involved in a degradation pathway of sulfoquinovose (SQ) that allows P.putida SQ1 to use SQ as the sole carbon and energy source for growth. This chain is 6-deoxy-6-sulfogluconolactonase, found in Pseudomonas putida (Arthrobacter siderocapsulatus).